A 502-amino-acid polypeptide reads, in one-letter code: Cytochrome P450 3A40 (502 aa).

C443 serves as a coordination point for heme.

Belongs to the cytochrome P450 family. The cofactor is heme.

Its subcellular location is the endoplasmic reticulum membrane. The protein localises to the microsome membrane. It carries out the reaction an organic molecule + reduced [NADPH--hemoprotein reductase] + O2 = an alcohol + oxidized [NADPH--hemoprotein reductase] + H2O + H(+). This Oryzias latipes (Japanese rice fish) protein is Cytochrome P450 3A40 (cyp3a40).